We begin with the raw amino-acid sequence, 1212 residues long: Dermatan-sulfate epimerase-like protein (1212 aa).

A signal peptide spans M1–S20. Residues N28, N666, N688, and N709 are each glycosylated (N-linked (GlcNAc...) asparagine). 2 helical membrane passes run I764–L784 and W803–C823. N874 carries N-linked (GlcNAc...) asparagine glycosylation.

Belongs to the dermatan-sulfate isomerase family. As to expression, expressed in different brain areas as well as in multiple other peripheral tissues.

Its subcellular location is the membrane. The polypeptide is Dermatan-sulfate epimerase-like protein (DSEL) (Homo sapiens (Human)).